The chain runs to 314 residues: Ribosomal RNA small subunit methyltransferase H (314 aa).

Residues 37–39 (GSH), Asp-57, Phe-84, Asp-105, and Gln-112 contribute to the S-adenosyl-L-methionine site.

Belongs to the methyltransferase superfamily. RsmH family.

The protein localises to the cytoplasm. The catalysed reaction is cytidine(1402) in 16S rRNA + S-adenosyl-L-methionine = N(4)-methylcytidine(1402) in 16S rRNA + S-adenosyl-L-homocysteine + H(+). Specifically methylates the N4 position of cytidine in position 1402 (C1402) of 16S rRNA. This is Ribosomal RNA small subunit methyltransferase H from Fusobacterium nucleatum subsp. nucleatum (strain ATCC 25586 / DSM 15643 / BCRC 10681 / CIP 101130 / JCM 8532 / KCTC 2640 / LMG 13131 / VPI 4355).